The sequence spans 260 residues: Thiazole synthase (260 aa).

The active-site Schiff-base intermediate with DXP is K96. Residues G157, 184-185, and 206-207 each bind 1-deoxy-D-xylulose 5-phosphate; these read AG and NT.

It belongs to the ThiG family. In terms of assembly, homotetramer. Forms heterodimers with either ThiH or ThiS.

The protein resides in the cytoplasm. It carries out the reaction [ThiS sulfur-carrier protein]-C-terminal-Gly-aminoethanethioate + 2-iminoacetate + 1-deoxy-D-xylulose 5-phosphate = [ThiS sulfur-carrier protein]-C-terminal Gly-Gly + 2-[(2R,5Z)-2-carboxy-4-methylthiazol-5(2H)-ylidene]ethyl phosphate + 2 H2O + H(+). It participates in cofactor biosynthesis; thiamine diphosphate biosynthesis. Its function is as follows. Catalyzes the rearrangement of 1-deoxy-D-xylulose 5-phosphate (DXP) to produce the thiazole phosphate moiety of thiamine. Sulfur is provided by the thiocarboxylate moiety of the carrier protein ThiS. In vitro, sulfur can be provided by H(2)S. This is Thiazole synthase from Rhodopseudomonas palustris (strain BisB5).